Consider the following 314-residue polypeptide: Methionyl-tRNA formyltransferase (314 aa).

112–115 (SLLP) is a (6S)-5,6,7,8-tetrahydrofolate binding site.

The protein belongs to the Fmt family.

The enzyme catalyses L-methionyl-tRNA(fMet) + (6R)-10-formyltetrahydrofolate = N-formyl-L-methionyl-tRNA(fMet) + (6S)-5,6,7,8-tetrahydrofolate + H(+). Its function is as follows. Attaches a formyl group to the free amino group of methionyl-tRNA(fMet). The formyl group appears to play a dual role in the initiator identity of N-formylmethionyl-tRNA by promoting its recognition by IF2 and preventing the misappropriation of this tRNA by the elongation apparatus. In Buchnera aphidicola subsp. Schizaphis graminum (strain Sg), this protein is Methionyl-tRNA formyltransferase.